Here is a 598-residue protein sequence, read N- to C-terminus: (+)-bornyl diphosphate synthase, chloroplastic (598 aa).

Residues 1–54 (MSIISMNVSILSKPLNCLHNLERRPSKALLVPCTAPTARLRASCSSKLQEAHQI) constitute a chloroplast transit peptide. Residue Arg314 participates in substrate binding. Mg(2+) contacts are provided by Asp351 and Asp355. The short motif at 351–355 (DDIYD) is the DDXXD motif element. Residue Arg493 coordinates substrate. Mg(2+) contacts are provided by Asp496, Thr500, and Glu504. Thr500 provides a ligand contact to substrate. Lys512 provides a ligand contact to substrate.

The protein belongs to the terpene synthase family. As to quaternary structure, homodimer. Mg(2+) is required as a cofactor.

It localises to the plastid. Its subcellular location is the chloroplast. The enzyme catalyses (2E)-geranyl diphosphate = (2S,4R)-bornyl diphosphate. It catalyses the reaction (2E)-geranyl diphosphate = (1R,4S)-camphene + diphosphate. It carries out the reaction (2E)-geranyl diphosphate = (1R,5R)-alpha-pinene + diphosphate. The protein operates within terpene metabolism; (R)-camphor biosynthesis. In terms of biological role, catalyzes the formation of the (+)-camphor precursor (+)-bornyl diphosphate from geranyl diphosphate. The enzyme also produces significant amounts of (+)-alpha-pinene, (+)-camphene, and (+-)-limonene. This chain is (+)-bornyl diphosphate synthase, chloroplastic, found in Salvia officinalis (Sage).